Here is a 721-residue protein sequence, read N- to C-terminus: Long-chain-fatty-acid--CoA ligase ACSBG1 (721 aa).

Residues 1-64 are disordered; the sequence is MPRSSEAGYC…SHGLELSAPE (64 aa). Over residues 26-43 the composition is skewed to polar residues; it reads QQGASMGTSPDNSQTSSL. Serine 34, serine 50, serine 53, and serine 70 each carry phosphoserine. ATP is bound by residues 279-287, 469-474, aspartate 547, and arginine 562; these read TSGTTGNPK and AGYGLS. At tyrosine 655 the chain carries Phosphotyrosine. ATP is bound at residue lysine 698.

The protein belongs to the ATP-dependent AMP-binding enzyme family. Bubblegum subfamily. In terms of tissue distribution, present in testis, at a lower level in brain, and at a very low level in ovary. Not detected in other tissues. tested. Present in Leydig cells of the adult testis and to a lesser degree in the seminiferous tubules in spermatogonia and Sertoli cells (at protein level).

Its subcellular location is the cytoplasm. It is found in the cytoplasmic vesicle. It localises to the microsome. The protein localises to the endoplasmic reticulum. The protein resides in the cell membrane. The catalysed reaction is a long-chain fatty acid + ATP + CoA = a long-chain fatty acyl-CoA + AMP + diphosphate. The enzyme catalyses (E)-hexadec-2-enoate + ATP + CoA = (2E)-hexadecenoyl-CoA + AMP + diphosphate. It catalyses the reaction hexadecanoate + ATP + CoA = hexadecanoyl-CoA + AMP + diphosphate. Catalyzes the conversion of fatty acids such as long-chain and very long-chain fatty acids to their active form acyl-CoAs for both synthesis of cellular lipids, and degradation via beta-oxidation. Can activate diverse saturated, monosaturated and polyunsaturated fatty acids. The sequence is that of Long-chain-fatty-acid--CoA ligase ACSBG1 from Rattus norvegicus (Rat).